Consider the following 367-residue polypeptide: NAD(P)H-quinone oxidoreductase subunit 1, chloroplastic (367 aa).

7 consecutive transmembrane segments (helical) span residues 30-50, 98-118, 127-147, 164-184, 273-293, 304-324, and 340-360; these read LFPILTLVLGITIGVLVIVWL, FSIGPSIAVISIFLSYSVIPF, LSIGVFFWIAISSIAPVGLLM, AAAQSISYEIPLALCVLSISL, LFVTVLYLGGWNLSIPYIFVP, VFGTLIGIFITLAKTYLFLFI, and LLNLGWKFLLPISLGNLLLTT.

The protein belongs to the complex I subunit 1 family. As to quaternary structure, NDH is composed of at least 16 different subunits, 5 of which are encoded in the nucleus.

Its subcellular location is the plastid. The protein localises to the chloroplast thylakoid membrane. The enzyme catalyses a plastoquinone + NADH + (n+1) H(+)(in) = a plastoquinol + NAD(+) + n H(+)(out). The catalysed reaction is a plastoquinone + NADPH + (n+1) H(+)(in) = a plastoquinol + NADP(+) + n H(+)(out). Its function is as follows. NDH shuttles electrons from NAD(P)H:plastoquinone, via FMN and iron-sulfur (Fe-S) centers, to quinones in the photosynthetic chain and possibly in a chloroplast respiratory chain. The immediate electron acceptor for the enzyme in this species is believed to be plastoquinone. Couples the redox reaction to proton translocation, and thus conserves the redox energy in a proton gradient. This is NAD(P)H-quinone oxidoreductase subunit 1, chloroplastic from Nicotiana tabacum (Common tobacco).